Consider the following 308-residue polypeptide: Porphobilinogen deaminase (308 aa).

An S-(dipyrrolylmethanemethyl)cysteine modification is found at C241.

The protein belongs to the HMBS family. As to quaternary structure, monomer. Dipyrromethane serves as cofactor.

The enzyme catalyses 4 porphobilinogen + H2O = hydroxymethylbilane + 4 NH4(+). The protein operates within porphyrin-containing compound metabolism; protoporphyrin-IX biosynthesis; coproporphyrinogen-III from 5-aminolevulinate: step 2/4. Its function is as follows. Tetrapolymerization of the monopyrrole PBG into the hydroxymethylbilane pre-uroporphyrinogen in several discrete steps. This Staphylococcus epidermidis (strain ATCC 35984 / DSM 28319 / BCRC 17069 / CCUG 31568 / BM 3577 / RP62A) protein is Porphobilinogen deaminase.